The following is a 383-amino-acid chain: Probable sphingolipid long chain base-responsive protein pil2 (383 aa).

S162 carries the phosphoserine modification. 2 disordered regions span residues 292–336 (PRTD…EDYQ) and 356–383 (GEED…PIAA). The segment covering 311–324 (TTSGTTHSYTSTGS) has biased composition (low complexity). 2 stretches are compositionally biased toward polar residues: residues 325-336 (KRYSQMGTEDYQ) and 368-383 (VAET…PIAA).

In terms of processing, phosphorylated by ksg1 and ppk21. Phosphorylation is regulated by sphingolipid long chain bases (LCBs).

Functionally, negative regulator of cell wall integrity (CWI) in unstressed cells, probably by inhibiting protein kinase ksg1/ppk21 activity and regulating their downstream CWI pathways pck2-MAP kinase pathway and protein kinase gad8 pathway. Activity may be regulated by the transient increase of sphingolipid long chain bases (LCBs) during heat stress. This Schizosaccharomyces pombe (strain 972 / ATCC 24843) (Fission yeast) protein is Probable sphingolipid long chain base-responsive protein pil2 (pil2).